Here is a 383-residue protein sequence, read N- to C-terminus: MKNKLPPFIEIYRALIATPSISATEEALDQSNADLITLLADWFKDLGFNVEVQPVPGTRNKFNMLASCGQGAGGLLLAGHTDTVPFDDGRWTRDPFTLTEHDGKLYGLGTADMKGFFAFILDALRDVDVTKLAKPLYILATADEETSMAGARYFAETTALRPDCAIIGEPTSLQPVRAHKGHISNAIRIQGQSGHSSDPARGVNAIELMHDAIGHILQLRDNLKERYHYDAFTVPYPTLNLGHIHGGDASNRICACCELHMDIRPLPGMTLNELNGLLNDALAPVSERWPGRLTVDELHPPIPGYECPPNHKLVEVVEKLLGAKTEVVNYCTEAPFIQTLCPTLVLGPGSINQAHQPDEYLETRFIKPTRELITQVIHHFCWH.

Residue H80 coordinates Zn(2+). The active site involves D82. D112 is a Zn(2+) binding site. E144 is a catalytic residue. E145, E169, and H355 together coordinate Zn(2+).

It belongs to the peptidase M20A family. ArgE subfamily. In terms of assembly, homodimer. Zn(2+) is required as a cofactor. The cofactor is Co(2+). Requires glutathione as cofactor.

It is found in the cytoplasm. The enzyme catalyses N(2)-acetyl-L-ornithine + H2O = L-ornithine + acetate. The protein operates within amino-acid biosynthesis; L-arginine biosynthesis; L-ornithine from N(2)-acetyl-L-ornithine (linear): step 1/1. Catalyzes the hydrolysis of the amide bond of N(2)-acetylated L-amino acids. Cleaves the acetyl group from N-acetyl-L-ornithine to form L-ornithine, an intermediate in L-arginine biosynthesis pathway, and a branchpoint in the synthesis of polyamines. The protein is Acetylornithine deacetylase of Escherichia coli O127:H6 (strain E2348/69 / EPEC).